A 483-amino-acid polypeptide reads, in one-letter code: Probable L-xylulose kinase (483 aa).

This sequence belongs to the FGGY kinase family. As to quaternary structure, homodimer.

It carries out the reaction L-xylulose + ATP = L-xylulose 5-phosphate + ADP + H(+). The protein is Probable L-xylulose kinase (lyx) of Pasteurella multocida (strain Pm70).